The primary structure comprises 146 residues: 3-hydroxyacyl-[acyl-carrier-protein] dehydratase FabZ (146 aa).

His-49 is a catalytic residue.

This sequence belongs to the thioester dehydratase family. FabZ subfamily.

It is found in the cytoplasm. The catalysed reaction is a (3R)-hydroxyacyl-[ACP] = a (2E)-enoyl-[ACP] + H2O. In terms of biological role, involved in unsaturated fatty acids biosynthesis. Catalyzes the dehydration of short chain beta-hydroxyacyl-ACPs and long chain saturated and unsaturated beta-hydroxyacyl-ACPs. The chain is 3-hydroxyacyl-[acyl-carrier-protein] dehydratase FabZ from Pseudomonas putida (strain ATCC 700007 / DSM 6899 / JCM 31910 / BCRC 17059 / LMG 24140 / F1).